The primary structure comprises 94 residues: Selenoprotein K (94 aa).

Residues 20–42 (LSLITDFFWGIAEFVVLFFKTLL) traverse the membrane as a helical segment. The interval 48 to 94 (KRRSYGNSSDSRYDDGRGPPGNPPRRMGRINHLRGPSPPPMAGGUGR) is disordered. Residue Sec92 is a non-standard amino acid, selenocysteine.

This sequence belongs to the selenoprotein K family. In terms of assembly, interacts with DERL1, DERL2, DERL3 and SELENOS. The SELENOK-SELENOS complex interacts with VCP. Interacts with ZDHHC6. Post-translationally, cleaved by CAPN2/m-calpain in resting macrophages but not in activated macrophages. Macrophage activation up-regulates expression of the calpain inhibitor CAST/calpastatin, resulting in inhibition of CAPN2 activity. Truncated SELENOK proteins produced by failed UGA/Sec decoding are ubiquitinated by the CRL2(KLHDC2) complex, which recognizes the diglycine (Gly-Gly) at the C-terminus of truncated SELENOK proteins. As to expression, highly expressed in heart.

Its subcellular location is the endoplasmic reticulum membrane. It is found in the cell membrane. Functionally, required for Ca(2+) flux in immune cells and plays a role in T-cell proliferation and in T-cell and neutrophil migration. Involved in endoplasmic reticulum-associated degradation (ERAD) of soluble glycosylated proteins. Required for palmitoylation and cell surface expression of CD36 and involved in macrophage uptake of low-density lipoprotein and in foam cell formation. Together with ZDHHC6, required for palmitoylation of ITPR1 in immune cells, leading to regulate ITPR1 stability and function. Plays a role in protection of cells from ER stress-induced apoptosis. Protects cells from oxidative stress when overexpressed in cardiomyocytes. This chain is Selenoprotein K, found in Homo sapiens (Human).